Consider the following 434-residue polypeptide: 23S rRNA (uracil(1939)-C(5))-methyltransferase RlmD (434 aa).

Residues 10-68 enclose the TRAM domain; the sequence is RVTTRQIITVTVNDLDPFGQGVARHQGKALFVSGVLPQEQAEVVLVEDKKQYARAQVKR. The [4Fe-4S] cluster site is built by Cys-81, Cys-87, Cys-90, and Cys-162. Residues Gln-265, Phe-294, Asn-299, Glu-315, Asn-342, and Asp-363 each coordinate S-adenosyl-L-methionine. Cys-389 serves as the catalytic Nucleophile.

Belongs to the class I-like SAM-binding methyltransferase superfamily. RNA M5U methyltransferase family. RlmD subfamily.

It carries out the reaction uridine(1939) in 23S rRNA + S-adenosyl-L-methionine = 5-methyluridine(1939) in 23S rRNA + S-adenosyl-L-homocysteine + H(+). In terms of biological role, catalyzes the formation of 5-methyl-uridine at position 1939 (m5U1939) in 23S rRNA. This Klebsiella pneumoniae (strain 342) protein is 23S rRNA (uracil(1939)-C(5))-methyltransferase RlmD.